The following is a 218-amino-acid chain: Very-long-chain (3R)-3-hydroxyacyl-CoA dehydratase hpo-8 (218 aa).

Helical transmembrane passes span 15–35, 44–64, 86–106, 137–157, and 176–196; these read ILGW…GLTW, FELK…IVGL, ILHL…LVAW, LFYV…FASL, and MGIS…PGFP. Catalysis depends on residues Tyr-142 and Glu-149.

It belongs to the very long-chain fatty acids dehydratase HACD family.

The protein localises to the membrane. The enzyme catalyses a very-long-chain (3R)-3-hydroxyacyl-CoA = a very-long-chain (2E)-enoyl-CoA + H2O. Its pathway is lipid metabolism; fatty acid biosynthesis. In terms of biological role, catalyzes the third of the four reactions of the long-chain fatty acids elongation cycle. This endoplasmic reticulum-bound enzymatic process, allows the addition of two carbons to the chain of long- and very long-chain fatty acids/VLCFAs per cycle. This enzyme catalyzes the dehydration of the 3-hydroxyacyl-CoA intermediate into trans-2,3-enoyl-CoA, within each cycle of fatty acid elongation. Thereby, it participates in the production of VLCFAs of different chain lengths that are involved in multiple biological processes as precursors of membrane lipids and lipid mediators. This Caenorhabditis elegans protein is Very-long-chain (3R)-3-hydroxyacyl-CoA dehydratase hpo-8 (hpo-8).